The following is a 1595-amino-acid chain: Pentafunctional AROM polypeptide (1595 aa).

The tract at residues 1–384 is 3-dehydroquinate synthase; it reads MGVPTKISIL…HEPRASTVSN (384 aa). Residues 44–46, 81–84, 114–116, and Asp119 each bind NAD(+); these read DTN, ESSK, and GGV. Arg130 contacts 7-phospho-2-dehydro-3-deoxy-D-arabino-heptonate. 139–140 contacts NAD(+); that stretch reads TT. 2 residues coordinate 7-phospho-2-dehydro-3-deoxy-D-arabino-heptonate: Asp146 and Lys152. NAD(+) is bound at residue Lys161. A 7-phospho-2-dehydro-3-deoxy-D-arabino-heptonate-binding site is contributed by Asn162. NAD(+)-binding positions include 179–182 and Asn190; that span reads FLNT. Zn(2+) is bound at residue Glu194. 7-phospho-2-dehydro-3-deoxy-D-arabino-heptonate contacts are provided by residues 194–197 and Lys250; that span reads EVIK. The active-site Proton acceptor; for 3-dehydroquinate synthase activity is Glu260. 7-phospho-2-dehydro-3-deoxy-D-arabino-heptonate is bound by residues 264–268 and His271; that span reads RNLLN. His271 is a binding site for Zn(2+). His275 functions as the Proton acceptor; for 3-dehydroquinate synthase activity in the catalytic mechanism. The 7-phospho-2-dehydro-3-deoxy-D-arabino-heptonate site is built by His287 and Lys356. Position 287 (His287) interacts with Zn(2+). The tract at residues 397–842 is EPSP synthase; it reads VSPGVPKGLD…WDSLAQTFKV (446 aa). Cys824 acts as the For EPSP synthase activity in catalysis. Residues 866 to 1057 are shikimate kinase; it reads ASIFIIGMRG…RRKENTFFVS (192 aa). ATP is bound at residue 872–879; sequence GMRGAGKT. A 3-dehydroquinase region spans residues 1058–1278; that stretch reads LTLPDLGLAA…AAPGQLSARE (221 aa). His1181 serves as the catalytic Proton acceptor; for 3-dehydroquinate dehydratase activity. The active-site Schiff-base intermediate with substrate; for 3-dehydroquinate dehydratase activity is Lys1209. Positions 1291 to 1595 are shikimate dehydrogenase; the sequence is AKKFAVIGNP…MGVLPSEDIS (305 aa).

The protein in the N-terminal section; belongs to the sugar phosphate cyclases superfamily. Dehydroquinate synthase family. In the 2nd section; belongs to the EPSP synthase family. It in the 3rd section; belongs to the shikimate kinase family. This sequence in the 4th section; belongs to the type-I 3-dehydroquinase family. The protein in the C-terminal section; belongs to the shikimate dehydrogenase family. As to quaternary structure, homodimer. The cofactor is Zn(2+).

It is found in the cytoplasm. It catalyses the reaction 7-phospho-2-dehydro-3-deoxy-D-arabino-heptonate = 3-dehydroquinate + phosphate. The enzyme catalyses 3-dehydroquinate = 3-dehydroshikimate + H2O. It carries out the reaction shikimate + NADP(+) = 3-dehydroshikimate + NADPH + H(+). The catalysed reaction is shikimate + ATP = 3-phosphoshikimate + ADP + H(+). It catalyses the reaction 3-phosphoshikimate + phosphoenolpyruvate = 5-O-(1-carboxyvinyl)-3-phosphoshikimate + phosphate. It participates in metabolic intermediate biosynthesis; chorismate biosynthesis; chorismate from D-erythrose 4-phosphate and phosphoenolpyruvate: step 2/7. Its pathway is metabolic intermediate biosynthesis; chorismate biosynthesis; chorismate from D-erythrose 4-phosphate and phosphoenolpyruvate: step 3/7. The protein operates within metabolic intermediate biosynthesis; chorismate biosynthesis; chorismate from D-erythrose 4-phosphate and phosphoenolpyruvate: step 4/7. It functions in the pathway metabolic intermediate biosynthesis; chorismate biosynthesis; chorismate from D-erythrose 4-phosphate and phosphoenolpyruvate: step 5/7. It participates in metabolic intermediate biosynthesis; chorismate biosynthesis; chorismate from D-erythrose 4-phosphate and phosphoenolpyruvate: step 6/7. The AROM polypeptide catalyzes 5 consecutive enzymatic reactions in prechorismate polyaromatic amino acid biosynthesis. The sequence is that of Pentafunctional AROM polypeptide from Ajellomyces capsulatus (strain H143) (Darling's disease fungus).